Reading from the N-terminus, the 736-residue chain is Replication restart protein PriA (736 aa).

Residues aspartate 230 to phenylalanine 396 form the Helicase ATP-binding domain. Glycine 243–threonine 250 is an ATP binding site. The DEAH box signature appears at aspartate 339–histidine 342. Cysteine 452, cysteine 455, cysteine 461, cysteine 464, cysteine 479, cysteine 482, cysteine 492, and cysteine 495 together coordinate Zn(2+). The region spanning glycine 487–glycine 643 is the Helicase C-terminal domain.

Belongs to the helicase family. PriA subfamily. As to quaternary structure, component of the replication restart primosome. The cofactor is Zn(2+).

It carries out the reaction Couples ATP hydrolysis with the unwinding of duplex DNA by translocating in the 3'-5' direction.. The catalysed reaction is ATP + H2O = ADP + phosphate + H(+). Initiates the restart of stalled replication forks, which reloads the replicative helicase on sites other than the origin of replication. Recognizes and binds to abandoned replication forks and remodels them to uncover a helicase loading site. Promotes assembly of the primosome at these replication forks. The polypeptide is Replication restart protein PriA (Thermotoga maritima (strain ATCC 43589 / DSM 3109 / JCM 10099 / NBRC 100826 / MSB8)).